We begin with the raw amino-acid sequence, 1436 residues long: DNA-directed RNA polymerase subunit beta' (1436 aa).

Residues cysteine 70, cysteine 72, cysteine 85, and cysteine 88 each contribute to the Zn(2+) site. Mg(2+)-binding residues include aspartate 481, aspartate 483, and aspartate 485. Zn(2+) is bound by residues cysteine 829, cysteine 903, cysteine 910, and cysteine 913.

It belongs to the RNA polymerase beta' chain family. As to quaternary structure, the RNAP catalytic core consists of 2 alpha, 1 beta, 1 beta' and 1 omega subunit. When a sigma factor is associated with the core the holoenzyme is formed, which can initiate transcription. It depends on Mg(2+) as a cofactor. Zn(2+) is required as a cofactor.

It catalyses the reaction RNA(n) + a ribonucleoside 5'-triphosphate = RNA(n+1) + diphosphate. In terms of biological role, DNA-dependent RNA polymerase catalyzes the transcription of DNA into RNA using the four ribonucleoside triphosphates as substrates. The chain is DNA-directed RNA polymerase subunit beta' from Flavobacterium johnsoniae (strain ATCC 17061 / DSM 2064 / JCM 8514 / BCRC 14874 / CCUG 350202 / NBRC 14942 / NCIMB 11054 / UW101) (Cytophaga johnsonae).